Consider the following 448-residue polypeptide: Velvet complex subunit 2 (448 aa).

2 disordered regions span residues 1–153 and 224–306; these read MNSA…SKIE and EPGT…NGYG. Low complexity predominate over residues 15–34; the sequence is PGPAYSSSAPPPIHTYQQHQ. 2 stretches are compositionally biased toward pro residues: residues 35–44 and 52–61; these read HPPPPLPPPS and PPLPPPPSAP. Positions 96-107 are enriched in low complexity; it reads APYQQSQPSQYP. Residues 116–132 are compositionally biased toward pro residues; the sequence is VPPPSQHDEPPPPPSSG. The region spanning 155-431 is the Velvet domain; that stretch reads GSGWKYSLDV…ANQGIKIPIR (277 aa). Residues 260–292 are compositionally biased toward low complexity; sequence QQSYGPAPSYPPSSSYGPPQQYYPRHSGYSAEP.

It belongs to the velvet family. VelB subfamily. Component of the heterotrimeric velvet complex composed of LAE1, VE1 and VELB; VE1 acting as a bridging protein between LAE1 and VEL2. Interacts with VE1. Forms a heterodimeric complex with VOS1; the formation of the VELB-VOS1 complex is light-dependent.

The protein localises to the nucleus. It is found in the cytoplasm. In terms of biological role, component of the velvet transcription factor complex that controls sexual/asexual developmental ratio in response to light, promoting sexual development in the darkness while stimulating asexual sporulation under illumination. The velvet complex acts as a global regulator for secondary metabolite gene expression. Component of the VELB-VOS1 heterodimeric complex that plays a dual role in activating genes associated with spore maturation and repressing certain development-associated genes. The VELB-VOS1 complex binds DNA through the DNA-binding domain of VOS1 that recognizes an 11-nucleotide consensus sequence 5'-CTGGCCGCGGC-3' consisting of two motifs in the promoters of key developmental regulatory genes. Controls the expression of the fumonisins gene cluster. Involved in cell wall integrity, cell surface hydrophobicity, hyphal polarity and conidiation pattern. Involved in oxidative stress resistance by positively regulating the transcription of the catalase-encoding gene CAT2. This chain is Velvet complex subunit 2, found in Gibberella moniliformis (strain M3125 / FGSC 7600) (Maize ear and stalk rot fungus).